The chain runs to 89 residues: Small ribosomal subunit protein uS15 (89 aa).

Belongs to the universal ribosomal protein uS15 family. In terms of assembly, part of the 30S ribosomal subunit. Forms a bridge to the 50S subunit in the 70S ribosome, contacting the 23S rRNA.

One of the primary rRNA binding proteins, it binds directly to 16S rRNA where it helps nucleate assembly of the platform of the 30S subunit by binding and bridging several RNA helices of the 16S rRNA. Its function is as follows. Forms an intersubunit bridge (bridge B4) with the 23S rRNA of the 50S subunit in the ribosome. The chain is Small ribosomal subunit protein uS15 from Nitratidesulfovibrio vulgaris (strain DSM 19637 / Miyazaki F) (Desulfovibrio vulgaris).